Here is a 417-residue protein sequence, read N- to C-terminus: NADH-quinone oxidoreductase subunit D (417 aa).

The protein belongs to the complex I 49 kDa subunit family. In terms of assembly, NDH-1 is composed of 14 different subunits. Subunits NuoB, C, D, E, F, and G constitute the peripheral sector of the complex.

It localises to the cell inner membrane. It carries out the reaction a quinone + NADH + 5 H(+)(in) = a quinol + NAD(+) + 4 H(+)(out). Functionally, NDH-1 shuttles electrons from NADH, via FMN and iron-sulfur (Fe-S) centers, to quinones in the respiratory chain. The immediate electron acceptor for the enzyme in this species is believed to be ubiquinone. Couples the redox reaction to proton translocation (for every two electrons transferred, four hydrogen ions are translocated across the cytoplasmic membrane), and thus conserves the redox energy in a proton gradient. In Francisella tularensis subsp. holarctica (strain FTNF002-00 / FTA), this protein is NADH-quinone oxidoreductase subunit D.